The chain runs to 283 residues: Bifunctional protein FolD 1 (283 aa).

Residues 166–168 and I232 each bind NADP(+); that span reads GRS.

The protein belongs to the tetrahydrofolate dehydrogenase/cyclohydrolase family. In terms of assembly, homodimer.

The catalysed reaction is (6R)-5,10-methylene-5,6,7,8-tetrahydrofolate + NADP(+) = (6R)-5,10-methenyltetrahydrofolate + NADPH. It carries out the reaction (6R)-5,10-methenyltetrahydrofolate + H2O = (6R)-10-formyltetrahydrofolate + H(+). It functions in the pathway one-carbon metabolism; tetrahydrofolate interconversion. Catalyzes the oxidation of 5,10-methylenetetrahydrofolate to 5,10-methenyltetrahydrofolate and then the hydrolysis of 5,10-methenyltetrahydrofolate to 10-formyltetrahydrofolate. In Lactobacillus johnsonii (strain CNCM I-12250 / La1 / NCC 533), this protein is Bifunctional protein FolD 1.